Here is a 28-residue protein sequence, read N- to C-terminus: MGEVFAGGFALLVVLFILLIIIGASWLY.

A helical membrane pass occupies residues 4-24 (VFAGGFALLVVLFILLIIIGA).

This sequence belongs to the SscA family.

The protein localises to the membrane. This is Probable small spore coat assembly protein B from Bacillus subtilis (strain 168).